A 250-amino-acid chain; its full sequence is MALHLGIITLLPEIIQGIHYGVTGRAIEQGLVKIDCWNPRDWSSRPYKQVDDKPYGGGPGMVIMYEPLHAAIKHARSEMKENCKTIYLSPQGKVVRQNDLKQIAAQKQSLLFVAGRYEGIDERIISHHVDEEWSLGDFVLSGGELAAMVFIDAIIRLIPGSLGHLGSAVQDSFMNGLLDCPHYTRPATINGLDVPDVLLGGNHKEIERWRRKQSLGKTWLKRPDLLEKVQLSETDKQLLAEFKCEHGDSC.

S-adenosyl-L-methionine is bound by residues glycine 115 and 135-140; that span reads LGDFVL.

The protein belongs to the RNA methyltransferase TrmD family. Homodimer.

It is found in the cytoplasm. It carries out the reaction guanosine(37) in tRNA + S-adenosyl-L-methionine = N(1)-methylguanosine(37) in tRNA + S-adenosyl-L-homocysteine + H(+). In terms of biological role, specifically methylates guanosine-37 in various tRNAs. This Legionella pneumophila (strain Lens) protein is tRNA (guanine-N(1)-)-methyltransferase.